The following is a 581-amino-acid chain: CUE domain-containing protein 3 (581 aa).

A CUE domain is found at 271-314 (INPGDVKSLIELFPQLSVEEAVEHLSASLGNIDAACESVITSSL). Phosphotyrosine is present on Y386. Disordered regions lie at residues 422–448 (DDTY…ASSK) and 522–581 (GSGN…SNEK). The segment covering 522–542 (GSGNTNIGSLRQTKFKQSNYT) has biased composition (polar residues). A compositionally biased stretch (basic residues) spans 552–581 (QHRPSRPSKNPSLKKKKYVRTKPKKASNEK).

As to quaternary structure, component of the RQT (ribosome quality control trigger) complex.

The protein localises to the cytoplasm. It is found in the nucleus. In terms of biological role, involved in activation of the ribosome quality control (RQC) pathway, a pathway that degrades nascent peptide chains during problematic translation. Specifically recognizes and binds RPS20/uS10 ubiquitinated by HEL2, promoting recruitment of the RQT (ribosome quality control trigger) complex on stalled ribosomes, followed by disassembly of stalled ribosomes. The sequence is that of CUE domain-containing protein 3 from Schizosaccharomyces pombe (strain 972 / ATCC 24843) (Fission yeast).